Reading from the N-terminus, the 102-residue chain is Spexin prohormone 1 (102 aa).

Residues 1–26 (MKDLRTLAAYALALLLLATFVSHSWS) form the signal peptide. A propeptide spanning residues 27 to 35 (APKGSFQRR) is cleaved from the precursor. Gln-49 carries the post-translational modification Glutamine amide. Residues 50-102 (GRRFVSEDRNEGDLYDTIRLESRSQNTENLSISKAAAFLLNILQQARDEDEPY) constitute a propeptide that is removed on maturation.

It belongs to the spexin family. Mainly expressed in the brain and ovary. Detected bilaterally in the adult brainstem. Expressed in neurons in the dorsal habenula (dHb). In the dHb some neurons project into the interpeduncular nucleus (IPN) where expression often overlaps with galr2a and galr2b. Weakly expressed in the liver, intestine, kidney, heart and gill.

It localises to the secreted. Its subcellular location is the extracellular space. The protein resides in the cytoplasmic vesicle. It is found in the secretory vesicle. In terms of biological role, plays a role in the regulation of food intake and energy metabolism. May also be involved in suppressing the anxiety response by promoting the expression of serotonin-related genes such as fev, tph2 and slc6a4a. Acts as a ligand for galanin receptors galr2a and galr2b. Brain administration of the peptide inhibits food consumption and elevates levels of glucose, triacylglycerol and cholesterol in the serum. Likely to control food intake by regulating appetite related genes which includes the negative regulation of the orexigenic factor agrp. By controlling food intake it may act as a satiety factor in energy metabolism. This is Spexin prohormone 1 (spx) from Danio rerio (Zebrafish).